We begin with the raw amino-acid sequence, 164 residues long: Putative lung carcinoma-associated protein 10 (164 aa).

Residues 1–164 (MSSCPVHDCP…TQKPQTTVGQ (164 aa)) form a disordered region. A compositionally biased stretch (low complexity) spans 23 to 40 (GSRGALRLRGGAPGSAAG). Residues 152–164 (MQKTQKPQTTVGQ) show a composition bias toward polar residues.

This chain is Putative lung carcinoma-associated protein 10 (LCA10), found in Homo sapiens (Human).